The chain runs to 2442 residues: Histone lysine acetyltransferase CREBBP (2442 aa).

2 disordered regions span residues 1-40 and 74-168; these read MAEN…ENDL and RGGS…PATS. Alanine 2 carries the post-translational modification N-acetylalanine. Residues 20–30 are compositionally biased toward polar residues; that stretch reads PGFSANDSTDF. Serine 120 carries the phosphoserine modification. The span at 125–168 shows a compositional bias: polar residues; the sequence is GDSSTPSLPKQAASTSGPTPPASQALNPQAQKQVGLVTSSPATS. Arginine 219 is subject to Omega-N-methylarginine. The tract at residues 226 to 409 is interaction with SRCAP; sequence PAPAMQGATS…GKACQVAHCA (184 aa). The segment covering 261–272 has biased composition (low complexity); the sequence is GGMTKMGMTGNT. The segment at 261–290 is disordered; the sequence is GGMTKMGMTGNTSPFGQPFSQTGGQPMGAT. A compositionally biased stretch (polar residues) spans 273–284; it reads SPFGQPFSQTGG. A TAZ-type 1 zinc finger spans residues 346-432; it reads DPEKRKLIQQ…RHDCPVCLPL (87 aa). Residues histidine 362, cysteine 366, cysteine 379, cysteine 384, histidine 393, cysteine 397, cysteine 403, cysteine 408, histidine 417, cysteine 421, cysteine 426, and cysteine 429 each contribute to the Zn(2+) site. In terms of domain architecture, KIX spans 586-665; it reads GVRKGWHEHV…KIYKIQKELE (80 aa). Residues arginine 600 and arginine 624 each carry the asymmetric dimethylarginine modification. Lysine 656 is modified (N6-acetyllysine). Residues 792–825 are compositionally biased toward polar residues; it reads FLPQNQFPSSSGAMSVNSVGMGQPATQAGVSQGQ. A disordered region spans residues 792–1084; it reads FLPQNQFPSS…STSPSQPRKK (293 aa). Composition is skewed to pro residues over residues 846 to 862 and 874 to 887; these read PCPP…PPPA and PTPP…PAAP. Over residues 894–906 the composition is skewed to polar residues; sequence VSSGQTPTPTPGS. 2 stretches are compositionally biased toward low complexity: residues 909-930 and 938-957; these read SAAQ…VTPQ and PSVA…HTQP. Positions 974–989 are enriched in polar residues; the sequence is PTPSSVTSAETSSQQP. A Glycyl lysine isopeptide (Lys-Gly) (interchain with G-Cter in SUMO1) cross-link involves residue lysine 999. Over residues 1012–1022 the composition is skewed to basic and acidic residues; that stretch reads AESKGEPRSEM. Lysine 1015 carries the post-translational modification N6-acetyllysine. Residue serine 1031 is modified to Phosphoserine. Over residues 1033–1060 the composition is skewed to basic and acidic residues; sequence VKEETDTTEQKSEPMEVEEKKPEVKVEA. Glycyl lysine isopeptide (Lys-Gly) (interchain with G-Cter in SUMO1) cross-links involve residues lysine 1034 and lysine 1057. Residues 1067–1080 show a composition bias toward polar residues; that stretch reads SANGTASQSTSPSQ. At serine 1077 the chain carries Phosphoserine. The Bromo domain maps to 1086 to 1193; that stretch reads FKPEELRQAL…EVFEQEIDPV (108 aa). The segment at 1125-1171 is interaction with histone; sequence DYFDIVKNPMDLSTIKRKLDTGQYQEPWQYVDDVWLMFNNAWLYNRK. The interval 1163 to 1181 is interaction with ASF1A; the sequence is NNAWLYNRKTSRVYKFCSK. At lysine 1217 the chain carries N6-acetyllysine. Positions 1324–1701 constitute a CBP/p300-type HAT domain; sequence KFSAKRLQTT…MLVELHTQGQ (378 aa). Residues serine 1383 and serine 1387 each carry the phosphoserine; by IKKA modification. The interval 1434–1436 is interaction with histone; that stretch reads YLD. Residues 1435 to 1437, 1447 to 1448, isoleucine 1494, arginine 1499, and tryptophan 1503 each bind acetyl-CoA; these read LDS and RT. The stretch at 1548-1575 forms a coiled coil; sequence NVLEESIKELEQEEEERKKEESTAASET. A compositionally biased stretch (basic and acidic residues) spans 1557–1569; sequence LEQEEEERKKEES. The segment at 1557–1616 is disordered; sequence LEQEEEERKKEESTAASETPEGSQGDSKNAKKKNNKKTNKNKSSISRANKKKPSMPNVSN. An N6-acetyllysine mark is found at lysine 1584, lysine 1592, lysine 1593, lysine 1596, and lysine 1598. A compositionally biased stretch (basic residues) spans 1586 to 1596; it reads AKKKNNKKTNK. The ZZ-type zinc finger occupies 1703 to 1751; sequence RFVYTCNECKHHVETRWHCTVCEDYDLCINCYNTKSHTHKMVKWGLGLD. Zn(2+) is bound by residues cysteine 1708, cysteine 1711, cysteine 1721, cysteine 1724, cysteine 1730, cysteine 1733, histidine 1739, and histidine 1741. 2 positions are modified to N6-acetyllysine: lysine 1742 and lysine 1745. Serine 1764 bears the Phosphoserine mark. The TAZ-type 2 zinc-finger motif lies at 1766–1847; sequence QESRRLSIQR…KCPVPFCLNI (82 aa). The segment at 1875–1960 is disordered; that stretch reads TRNVPQQSLP…QPPPAAVEAA (86 aa). Pro residues-rich tracts occupy residues 1901 to 1913 and 1944 to 1955; these read PQTP…PQPS and PAPPPPAQPPPA. Residues serine 2064, serine 2077, and serine 2080 each carry the phosphoserine modification. Residues 2112–2421 are disordered; sequence NQPGMQPQPG…LNTPNRSALS (310 aa). Composition is skewed to low complexity over residues 2113–2138, 2197–2217, 2261–2280, and 2287–2305; these read QPGM…HQQP, QLLQ…QQQQ, MGQM…PGLG, and IQQA…KQQI. 2 stretches are compositionally biased toward polar residues: residues 2315-2327 and 2334-2343; these read SPQQ…QPQA and QIATSLSNQV. A compositionally biased stretch (pro residues) spans 2349–2372; the sequence is VQSPRPQSQPPHSSPSPRIQPQPS. At serine 2351 the chain carries Phosphoserine. A compositionally biased stretch (polar residues) spans 2411 to 2421; the sequence is QLNTPNRSALS.

As to quaternary structure, part of a complex composed of MSX3, CREBBP/CBP AND EP300/p300; the interaction with MSX3 decreases histone acetylation activity. Found in a complex containing NCOA2; NCOA3; IKKA; IKKB and IKBKG. Probably part of a complex with HIF1A and EP300. Interacts with phosphorylated CREB1. Interacts with the C-terminal region of CITED4. The TAZ-type 1 domain interacts with HIF1A. Interacts with SRCAP, CARM1, ELF3, MLLT7/FOXO4, N4BP2, NCOA1, NCOA3, NCOA6, PCAF, DDX5, DDX17, PELP1, PML, SMAD1, SMAD2, SMAD3, SPIB, TRERF1 and ZCCHC12. Interacts with KLF1; the interaction results in acetylation and enhancement of transcriptional activity of KLF1. Interacts with DAXX; the interaction is dependent on CBP sumoylation and results in suppression of the transcriptional activity via recruitment of HDAC2 to DAXX. Interacts with MAF. Interacts with MTDH. Interacts with MAFG; the interaction acetylates MAFG in the basic region and stimulates NFE2 transcriptional activity through increasing its DNA-binding activity. Interacts with IRF2; the interaction acetylates IRF2 and regulates its activity on the H4 promoter. Interacts (via N-terminus) with SS18L1/CREST (via C-terminus). Interacts with IRF3 (when phosphorylated); forming the dsRNA-activated factor 1 (DRAF1), a complex which activates the transcription of the type I interferon genes. Interacts with MECOM. Interacts with CITED1 (via C-terminus) Interacts with GATA1; the interaction results in acetylation and enhancement of transcriptional activity of GATA1. Interacts with FOXO1; the interaction acetylates FOXO1 and inhibits its transcriptional activity. Interacts with NPAS2, CLOCK and BMAL1. Interacts with ASF1A and ASF1B; this promotes histone acetylation. Interacts with acetylated TP53/p53 and with the acetylated histones H3 and H4. Interacts (via transactivation domain and C-terminus) with PCNA; the interaction occurs on chromatin in UV-irradiated damaged cells. Interacts with DHX9 (via N-terminus); this interaction mediates association with RNA polymerase II holoenzyme and stimulates CREB-dependent transcriptional activation. Interacts with SMAD4; negatively regulated by ZBTB7A. Forms a complex with KMT2A and CREB1. Interacts with DDX3X; this interaction may facilitate HNF4A acetylation. Interacts with MSX1; the interaction may inhibit MSX1 autoinactivation. Interacts with MSX3. Interacts with ACSS2. Post-translationally, methylation of the KIX domain by CARM1 blocks association with CREB. This results in the blockade of CREB signaling, and in activation of apoptotic response. Phosphorylated by CHUK/IKKA at Ser-1383 and Ser-1387; these phosphorylations promote cell growth by switching the binding preference of CREBBP from TP53 to NF-kappa-B. In terms of processing, sumoylation negatively regulates transcriptional activity via the recruitment of DAAX. Post-translationally, autoacetylation is required for binding to protein substrates, such as acetylated histones and acetylated TP53/p53. Autoacetylation is induced by glucose and fatty acids. Expressed in hypothalamus and cortex.

Its subcellular location is the cytoplasm. It is found in the nucleus. It catalyses the reaction L-lysyl-[histone] + acetyl-CoA = N(6)-acetyl-L-lysyl-[histone] + CoA + H(+). The enzyme catalyses L-lysyl-[protein] + acetyl-CoA = N(6)-acetyl-L-lysyl-[protein] + CoA + H(+). The catalysed reaction is (S)-lactoyl-CoA + L-lysyl-[protein] = N(6)-[(S)-lactoyl]-L-lysyl-[protein] + CoA + H(+). Its function is as follows. Acetylates histones, giving a specific tag for transcriptional activation. Mediates acetylation of histone H3 at 'Lys-18' and 'Lys-27' (H3K18ac and H3K27ac, respectively). Also acetylates non-histone proteins, like DDX21, FBL, IRF2, MAFG, NCOA3, POLR1E/PAF53 and FOXO1. Binds specifically to phosphorylated CREB and enhances its transcriptional activity toward cAMP-responsive genes. Acts as a coactivator of ALX1. Acts as a circadian transcriptional coactivator which enhances the activity of the circadian transcriptional activators: NPAS2-BMAL1 and CLOCK-BMAL1 heterodimers. Acetylates PCNA; acetylation promotes removal of chromatin-bound PCNA and its degradation during nucleotide excision repair (NER). Acetylates POLR1E/PAF53, leading to decreased association of RNA polymerase I with the rDNA promoter region and coding region. Acetylates DDX21, thereby inhibiting DDX21 helicase activity. Acetylates FBL, preventing methylation of 'Gln-105' of histone H2A (H2AQ104me). In addition to protein acetyltransferase, can use different acyl-CoA substrates, such as lactoyl-CoA, and is able to mediate protein lactylation. Catalyzes lactylation of MRE11 in response to DNA damage, thereby promoting DNA double-strand breaks (DSBs) via homologous recombination (HR). Functions as a transcriptional coactivator for SMAD4 in the TGF-beta signaling pathway. This chain is Histone lysine acetyltransferase CREBBP (Crebbp), found in Rattus norvegicus (Rat).